Reading from the N-terminus, the 401-residue chain is Anhydro-N-acetylmuramic acid kinase (401 aa).

G25–D32 contacts ATP.

Belongs to the anhydro-N-acetylmuramic acid kinase family.

It carries out the reaction 1,6-anhydro-N-acetyl-beta-muramate + ATP + H2O = N-acetyl-D-muramate 6-phosphate + ADP + H(+). The protein operates within amino-sugar metabolism; 1,6-anhydro-N-acetylmuramate degradation. It participates in cell wall biogenesis; peptidoglycan recycling. In terms of biological role, catalyzes the specific phosphorylation of 1,6-anhydro-N-acetylmuramic acid (anhMurNAc) with the simultaneous cleavage of the 1,6-anhydro ring, generating MurNAc-6-P. Is required for the utilization of anhMurNAc either imported from the medium or derived from its own cell wall murein, and thus plays a role in cell wall recycling. The chain is Anhydro-N-acetylmuramic acid kinase from Pseudoalteromonas translucida (strain TAC 125).